We begin with the raw amino-acid sequence, 74 residues long: Protein SlyX homolog (74 aa).

The tract at residues 52-74 (LKQMQENQSTDSDPADEPPPPHY) is disordered.

This sequence belongs to the SlyX family.

The sequence is that of Protein SlyX homolog from Idiomarina loihiensis (strain ATCC BAA-735 / DSM 15497 / L2-TR).